A 490-amino-acid polypeptide reads, in one-letter code: GTPase Der (490 aa).

2 consecutive EngA-type G domains span residues 3–166 and 203–376; these read PVVA…MDDV and IKLA…DSST. GTP is bound by residues 9–16, 56–60, 118–121, 209–216, 256–260, and 321–324; these read GRPNVGKS, DTGGI, NKTD, DTAGV, and NKWD. The KH-like domain maps to 377 to 461; it reads RRVSTAMLTR…PIRIQFKEGE (85 aa).

Belongs to the TRAFAC class TrmE-Era-EngA-EngB-Septin-like GTPase superfamily. EngA (Der) GTPase family. In terms of assembly, associates with the 50S ribosomal subunit.

Its function is as follows. GTPase that plays an essential role in the late steps of ribosome biogenesis. This is GTPase Der from Salmonella newport (strain SL254).